The following is a 1405-amino-acid chain: DNA-directed RNA polymerase subunit beta' (1405 aa).

Positions 71, 73, 86, and 89 each coordinate Zn(2+). Mg(2+)-binding residues include aspartate 462, aspartate 464, and aspartate 466. Residues cysteine 810, cysteine 884, cysteine 891, and cysteine 894 each coordinate Zn(2+).

It belongs to the RNA polymerase beta' chain family. As to quaternary structure, the RNAP catalytic core consists of 2 alpha, 1 beta, 1 beta' and 1 omega subunit. When a sigma factor is associated with the core the holoenzyme is formed, which can initiate transcription. The cofactor is Mg(2+). Zn(2+) serves as cofactor.

It carries out the reaction RNA(n) + a ribonucleoside 5'-triphosphate = RNA(n+1) + diphosphate. Functionally, DNA-dependent RNA polymerase catalyzes the transcription of DNA into RNA using the four ribonucleoside triphosphates as substrates. The sequence is that of DNA-directed RNA polymerase subunit beta' from Maricaulis maris (strain MCS10) (Caulobacter maris).